The sequence spans 151 residues: UPF0561 protein C2orf68 homolog (151 aa).

A disordered region spans residues 1–89 (MEEEGEAQGR…TLKDEPNDNG (89 aa)). Composition is skewed to basic and acidic residues over residues 32–46 (LARD…QAKE) and 70–85 (RQRE…KDEP).

Belongs to the UPF0561 family.

The polypeptide is UPF0561 protein C2orf68 homolog (Xenopus laevis (African clawed frog)).